The sequence spans 660 residues: Acetyl-coenzyme A synthetase (660 aa).

Residues 197-200 (RGGK) and threonine 317 contribute to the CoA site. Residues 397 to 399 (GEP), 421 to 426 (DTFWQT), aspartate 512, and arginine 528 each bind ATP. A CoA-binding site is contributed by serine 536. Arginine 539 is a binding site for ATP. Mg(2+) is bound by residues valine 550 and valine 555. N6-acetyllysine is present on lysine 625.

The protein belongs to the ATP-dependent AMP-binding enzyme family. Mg(2+) is required as a cofactor. Acetylated. Deacetylation by the SIR2-homolog deacetylase activates the enzyme.

The catalysed reaction is acetate + ATP + CoA = acetyl-CoA + AMP + diphosphate. Catalyzes the conversion of acetate into acetyl-CoA (AcCoA), an essential intermediate at the junction of anabolic and catabolic pathways. AcsA undergoes a two-step reaction. In the first half reaction, AcsA combines acetate with ATP to form acetyl-adenylate (AcAMP) intermediate. In the second half reaction, it can then transfer the acetyl group from AcAMP to the sulfhydryl group of CoA, forming the product AcCoA. The chain is Acetyl-coenzyme A synthetase from Ralstonia nicotianae (strain ATCC BAA-1114 / GMI1000) (Ralstonia solanacearum).